The following is a 262-amino-acid chain: Sepiapterin reductase (262 aa).

Met-1 carries the N-acetylmethionine modification. Residues 15 to 21 and 43 to 44 each bind NADP(+); these read GASRGFG and RS. Ser-46 is subject to Phosphoserine. 70 to 71 lines the NADP(+) pocket; that stretch reads DL. Residues 158–159 and Tyr-171 contribute to the substrate site; that span reads SL. Lys-175 serves as a coordination point for NADP(+). Phosphoserine is present on Ser-196. Gly-200 contacts substrate. 202–207 provides a ligand contact to NADP(+); the sequence is LDTDMQ. Ser-214 is subject to Phosphoserine. Asp-258 provides a ligand contact to substrate.

Belongs to the sepiapterin reductase family. Homodimer.

It is found in the cytoplasm. It catalyses the reaction L-erythro-7,8-dihydrobiopterin + NADP(+) = L-sepiapterin + NADPH + H(+). The enzyme catalyses (6R)-L-erythro-5,6,7,8-tetrahydrobiopterin + 2 NADP(+) = 6-pyruvoyl-5,6,7,8-tetrahydropterin + 2 NADPH + 2 H(+). It carries out the reaction (S)-benzoin + NADP(+) = benzil + NADPH + H(+). Catalyzes the final one or two reductions in tetra-hydrobiopterin biosynthesis to form 5,6,7,8-tetrahydrobiopterin. The enzyme also catalyzes the reduction of benzil to (S)-benzoin. This is Sepiapterin reductase (SPR) from Meriones unguiculatus (Mongolian jird).